A 412-amino-acid chain; its full sequence is MILHTLRLRSFRAHAESEFDLAPSINLLYGANGAGKTNVLEAVHYLCLTKSFTASRDRYAVRKDAPYFEIEGRIGQVREEPMTVRLAYVPGEGKSIFVNGAELDRLADIVGTLPVVVFSPEDYDLTAGGPSERRRFVNNILSQARSVYMETLMKYRRARRQRNEVLRSYKKRSAPPPDELLAPWTEKLVGLGSRIVHRRQQFLQAFADDLEEAYRRIDAVAERPTIEYDTIADLAPDATPDAIEDEFRAALARKQGQERDRGTTLVGPQRDELVFRLDDLEVRRYGSQGQHRTFAMALKLAQYFYLQQRNDTEPLLLLDDAFGKLDAERTGVFLDLLRSDAVGQSLVTATRRGPFEPALNAEPASHRALQVRPGGGTAAVTPDPEYARGEATAANGAASAPTGADAASTSRD.

ATP is bound at residue 30 to 37 (GANGAGKT). Residues 369–412 (LQVRPGGGTAAVTPDPEYARGEATAANGAASAPTGADAASTSRD) form a disordered region. The span at 389–412 (GEATAANGAASAPTGADAASTSRD) shows a compositional bias: low complexity.

Belongs to the RecF family.

The protein resides in the cytoplasm. Its function is as follows. The RecF protein is involved in DNA metabolism; it is required for DNA replication and normal SOS inducibility. RecF binds preferentially to single-stranded, linear DNA. It also seems to bind ATP. This is DNA replication and repair protein RecF from Salinibacter ruber (strain DSM 13855 / M31).